We begin with the raw amino-acid sequence, 193 residues long: MKKLEERILRDGNVLGENILKVDSFLTHQVDFTLMKEIGQVFADIFHESGITKVVTIEASGIAPAVYTAEALGVPMIFAKKAKNITMTEGILTAEVYSFTKQVTSTVSIAGKFLSPSDKVLVIDDFLANGQAAKGLVEIIRQAGASVEAIGIVIEKSFQSGRKLLEDDGQRVVSLARIEKFENGKVVFGKADA.

Residues Leu-20 and Thr-27 each coordinate xanthine. 128-132 (ANGQA) is a 5-phospho-alpha-D-ribose 1-diphosphate binding site. Position 156 (Lys-156) interacts with xanthine.

This sequence belongs to the purine/pyrimidine phosphoribosyltransferase family. Xpt subfamily. Homodimer.

It is found in the cytoplasm. It catalyses the reaction XMP + diphosphate = xanthine + 5-phospho-alpha-D-ribose 1-diphosphate. It functions in the pathway purine metabolism; XMP biosynthesis via salvage pathway; XMP from xanthine: step 1/1. Functionally, converts the preformed base xanthine, a product of nucleic acid breakdown, to xanthosine 5'-monophosphate (XMP), so it can be reused for RNA or DNA synthesis. This Streptococcus gordonii (strain Challis / ATCC 35105 / BCRC 15272 / CH1 / DL1 / V288) protein is Xanthine phosphoribosyltransferase.